A 321-amino-acid polypeptide reads, in one-letter code: Translation initiation factor eIF2B subunit alpha (321 aa).

This sequence belongs to the eIF-2B alpha/beta/delta subunits family. As to quaternary structure, component of the translation initiation factor 2B (eIF2B) complex which is a heterodecamer of two sets of five different subunits: alpha, beta, gamma, delta and epsilon. Subunits alpha, beta and delta comprise a regulatory subcomplex and subunits epsilon and gamma comprise a catalytic subcomplex. Within the complex, the hexameric regulatory complex resides at the center, with the two heterodimeric catalytic subcomplexes bound on opposite sides.

It localises to the cytoplasm. It is found in the cytosol. Its function is as follows. Acts as a component of the translation initiation factor 2B (eIF2B) complex, which catalyzes the exchange of GDP for GTP on eukaryotic initiation factor 2 (eIF2) gamma subunit. Its guanine nucleotide exchange factor activity is repressed when bound to eIF2 complex phosphorylated on the alpha subunit, thereby limiting the amount of methionyl-initiator methionine tRNA available to the ribosome and consequently global translation is repressed. This is Translation initiation factor eIF2B subunit alpha (eif2b1) from Dictyostelium discoideum (Social amoeba).